A 471-amino-acid chain; its full sequence is Phosphatidylserine synthase 1 (471 aa).

An N-acetylalanine modification is found at A2. At 2–35 (ASCVGSRTLSKDDVNYRMHFRMINEQQVEDITID) the chain is on the cytoplasmic side. Residues 36 to 56 (FFYRPHTITLLSFTIVSLMYF) traverse the membrane as a helical segment. Residues 57 to 72 (AFTRDDSVPEDNIWRG) lie on the Lumenal side of the membrane. The helical transmembrane segment at 73–93 (ILSVIFFFLIISVLAFPNGPF) threads the bilayer. Residues 94-102 (TRPHPALWR) lie on the Cytoplasmic side of the membrane. The helical transmembrane segment at 103 to 123 (MVFGLSVLYFLFLVFLLFLNF) threads the bilayer. The Lumenal segment spans residues 124–160 (EQVKSLMYWLDPNLRYATREADIMEYAVNCHVITWER). A helical membrane pass occupies residues 161-181 (IVSHFDIFAFGHFWGWAMKAL). The Cytoplasmic portion of the chain corresponds to 182–186 (LIRSY). A helical transmembrane segment spans residues 187-207 (GLCWTISITWELTELFFMHLL). The Lumenal portion of the chain corresponds to 208 to 216 (PNFAECWWD). The chain crosses the membrane as a helical span at residues 217-237 (QVILDILLCNGGGIWLGMVVC). Residues 238-286 (RFLEMRTYHWASFKDIHTTTGKIKRAVLQFTPASWTYVRWFDPKSSFQR) are Cytoplasmic-facing. A helical transmembrane segment spans residues 287-307 (VAGVYLFMIIWQLTELNTFFL). Residues 308–309 (KH) are Lumenal-facing. A helical membrane pass occupies residues 310-330 (IFVFQASHPLSWCRILFIGCI). Topologically, residues 331–355 (TAPTVRQYYAYLTDTQCKRVGTQCW) are cytoplasmic. The helical transmembrane segment at 356–376 (VFGVIGFLEAIVCIKFGQDLF) threads the bilayer. Over 377–380 (SKTQ) the chain is Lumenal. A helical transmembrane segment spans residues 381–401 (ILYVVFWLLCVAFTTFLCLYG). Over 402 to 471 (MVWYAEHYGH…SKVTNGVGKK (70 aa)) the chain is Cytoplasmic. S417, S440, and S452 each carry phosphoserine. Residues 426–471 (ISWHHGKGSKGSEDSPPKHSSNNESHSSRRRNRHSKSKVTNGVGKK) are disordered. The span at 453-462 (SRRRNRHSKS) shows a compositional bias: basic residues.

Belongs to the phosphatidyl serine synthase family.

Its subcellular location is the endoplasmic reticulum membrane. It carries out the reaction a 1,2-diacyl-sn-glycero-3-phosphoethanolamine + L-serine = a 1,2-diacyl-sn-glycero-3-phospho-L-serine + ethanolamine. The enzyme catalyses a 1,2-diacyl-sn-glycero-3-phosphocholine + L-serine = a 1,2-diacyl-sn-glycero-3-phospho-L-serine + choline. The protein operates within phospholipid metabolism; phosphatidylserine biosynthesis. Its activity is regulated as follows. Inhibited by exogenous phosphatidylserine. Functionally, catalyzes a base-exchange reaction in which the polar head group of phosphatidylethanolamine (PE) or phosphatidylcholine (PC) is replaced by L-serine. Catalyzes mainly the conversion of phosphatidylcholine. Also converts, in vitro and to a lesser extent, phosphatidylethanolamine. In Cricetulus griseus (Chinese hamster), this protein is Phosphatidylserine synthase 1 (PTDSS1).